The chain runs to 227 residues: Urease subunit gamma/beta (227 aa).

The segment at 1-101 is urease gamma; that stretch reads MRLTPTERDR…LAVVTDPIGG (101 aa). The tract at residues 102–227 is urease beta; it reads GLGDQAPGAL…ACGYLGVEQR (126 aa).

It in the N-terminal section; belongs to the urease gamma subunit family. In the C-terminal section; belongs to the urease beta subunit family. In terms of assembly, heterohexamer of 3 UreC (alpha) and 3 UreAB (gamma/beta) subunits.

It localises to the cytoplasm. The enzyme catalyses urea + 2 H2O + H(+) = hydrogencarbonate + 2 NH4(+). Its pathway is nitrogen metabolism; urea degradation; CO(2) and NH(3) from urea (urease route): step 1/1. This chain is Urease subunit gamma/beta, found in Streptomyces avermitilis (strain ATCC 31267 / DSM 46492 / JCM 5070 / NBRC 14893 / NCIMB 12804 / NRRL 8165 / MA-4680).